We begin with the raw amino-acid sequence, 209 residues long: Putative thymidylate synthase (209 aa).

C137 is a catalytic residue.

Belongs to the thymidylate synthase family. Archaeal-type ThyA subfamily. Monomer.

Its subcellular location is the cytoplasm. It functions in the pathway pyrimidine metabolism; dTTP biosynthesis. Its function is as follows. May catalyze the biosynthesis of dTMP using an unknown cosubstrate. The chain is Putative thymidylate synthase from Methanopyrus kandleri (strain AV19 / DSM 6324 / JCM 9639 / NBRC 100938).